A 491-amino-acid polypeptide reads, in one-letter code: MSKYQINCIRYRHFLRTSNISQIPDFTKYCIGPVNEELAPYIMETMKAYPSNSEYINPQHYYHNRTVLVENYLKRSPNPVSLTQLAQYYDDSTKLTRTKIINSGKFVKEELVIRIAHKLNQLQQLPFNVVNNFHFVQVYESYYNIFESFRKYPTIRTLEDASQFADFIKNMLEGFNTLNLPHLIMGALECTILDLYPREKMDQLLSDLLRARISRRLIVEEHVSITANYTSGKEENTLVLGDIFQECSAKKYLLEASEESQKFIQDMYFKDIPMPEFIIEGDTQLSFYFLPTHLKYLLGEILRNTYEATMKHYIRKGLEKPEPIIVTVVSNDESYLFRISDKAGGVLHDDENLWSFGKSKERAQESLNNFHKLPGLQTVSIYDEVHSHTKYNSKLKSLQSITLKPYMHTSLEPMSYPSIINGHIKYETPLIELLKRSFRYKLGIGLAMCKVYAEYWNGDLSLHSMPGYGTDVVLKLGNLMKHTKKLQLDKV.

The Histidine kinase domain occupies 153–480 (PTIRTLEDAS…DVVLKLGNLM (328 aa)). ATP contacts are provided by residues 300–307 (EILRNTYE), aspartate 341, 359–360 (SK), and 383–446 (DEVH…GIGL).

The protein belongs to the PDK/BCKDK protein kinase family. Interacts with PKP1.

Its subcellular location is the mitochondrion matrix. It carries out the reaction L-seryl-[pyruvate dehydrogenase E1 alpha subunit] + ATP = O-phospho-L-seryl-[pyruvate dehydrogenase E1 alpha subunit] + ADP + H(+). Functionally, inhibits the mitochondrial pyruvate dehydrogenase complex by phosphorylation of the E1 alpha subunit (PDA1), thus contributing to the regulation of glucose metabolism. The polypeptide is [Pyruvate dehydrogenase (acetyl-transferring)] kinase 2, mitochondrial (Saccharomyces cerevisiae (strain ATCC 204508 / S288c) (Baker's yeast)).